Reading from the N-terminus, the 235-residue chain is Maximins-S type A (235 aa).

An N-terminal signal peptide occupies residues 1-18; the sequence is MNFNYFILVLFFITSGHA. 2 consecutive propeptides follow at residues 19-35 and 52-65; these read KSET…HIKR and SAEE…LVKR. Asn83 bears the Asparagine amide mark. The propeptide occupies 87–100; it reads SAEEQDLAEDLVTR. An Asparagine amide modification is found at Asn118. Residues 122–135 constitute a propeptide that is removed on maturation; it reads SAEEQDLAEDLVKR. The residue at position 153 (Asn153) is an Asparagine amide. A propeptide spanning residues 157–170 is cleaved from the precursor; it reads SAEEQDLAEDLVTR. Residue Lys188 is modified to Lysine amide. Positions 192 to 205 are excised as a propeptide; it reads SAEDQDLAEDLVTR. Lysine amide is present on Lys223. Residues 227–235 constitute a propeptide that is removed on maturation; that stretch reads SAEQEKDMK.

The protein belongs to the maximin-S family. In terms of tissue distribution, expressed by the skin dorsal glands.

It is found in the secreted. Its function is as follows. Maximin-S1 has no antimicrobial activity. Has no hemolytic activity. Maximin-S2 has an activity against mycoplasma but has no activity against common Gram-positive and Gram-negative bacteria nor fungi. Has no hemolytic activity. In terms of biological role, maximin-S3 has an activity against mycoplasma but has no activity against common Gram-positive and Gram-negative bacteria nor fungi. Has no hemolytic activity. Functionally, maximin-S4 has an activity against mycoplasma but has no activity against common Gram-positive and Gram-negative bacteria nor fungi. Has no hemolytic activity. Its function is as follows. Maximin-S5 has an activity against mycoplasma but has no activity against common Gram-positive and Gram-negative bacteria nor fungi. Has no hemolytic activity. The protein is Maximins-S type A of Bombina maxima (Giant fire-bellied toad).